The following is a 287-amino-acid chain: uncharacterized protein (287 aa).

Over residues 1–17 (MRWQGRRESDNVEDRRN) the composition is skewed to basic and acidic residues. A disordered region spans residues 1–29 (MRWQGRRESDNVEDRRNSSGGPSMGGPGF). A helical transmembrane segment spans residues 38 to 60 (LILLIVVLVAGYYGVDLTGLMTG).

It is found in the membrane. This is an uncharacterized protein from Escherichia coli O6:H1 (strain CFT073 / ATCC 700928 / UPEC).